The chain runs to 433 residues: Phosphoribosylamine--glycine ligase (433 aa).

Residues 110-317 (RNFMKKYGIE…FVDIMSAVVK (208 aa)) form the ATP-grasp domain. 137 to 194 (IEKLGDVAVKPSGLTGGKGVKVMGDQLPDLKAAKAYTSELLEKGSVVIEERFIGEEFT) contributes to the ATP binding site. The Mg(2+) site is built by glutamine 275, glutamate 287, and asparagine 289. Glutamine 275, glutamate 287, and asparagine 289 together coordinate Mn(2+).

This sequence belongs to the GARS family. Mg(2+) is required as a cofactor. It depends on Mn(2+) as a cofactor.

It carries out the reaction 5-phospho-beta-D-ribosylamine + glycine + ATP = N(1)-(5-phospho-beta-D-ribosyl)glycinamide + ADP + phosphate + H(+). It participates in purine metabolism; IMP biosynthesis via de novo pathway; N(1)-(5-phospho-D-ribosyl)glycinamide from 5-phospho-alpha-D-ribose 1-diphosphate: step 2/2. This Methanosarcina barkeri (strain Fusaro / DSM 804) protein is Phosphoribosylamine--glycine ligase.